Consider the following 172-residue polypeptide: Ribosome maturation factor RimM (172 aa).

Residues 94–167 form the PRC barrel domain; sequence EGSYYYKDII…VAHVIVPEGL (74 aa).

It belongs to the RimM family. In terms of assembly, binds ribosomal protein uS19.

It localises to the cytoplasm. An accessory protein needed during the final step in the assembly of 30S ribosomal subunit, possibly for assembly of the head region. Essential for efficient processing of 16S rRNA. May be needed both before and after RbfA during the maturation of 16S rRNA. It has affinity for free ribosomal 30S subunits but not for 70S ribosomes. The sequence is that of Ribosome maturation factor RimM from Lacticaseibacillus paracasei (strain ATCC 334 / BCRC 17002 / CCUG 31169 / CIP 107868 / KCTC 3260 / NRRL B-441) (Lactobacillus paracasei).